A 215-amino-acid chain; its full sequence is Cytochrome b6 (215 aa).

The chain crosses the membrane as a helical span at residues 32 to 52 (IFYCFGGITFTCFLVQVATGF). Cysteine 35 serves as a coordination point for heme c. Residues histidine 86 and histidine 100 each coordinate heme b. Transmembrane regions (helical) follow at residues 90-110 (ASMM…TGGF), 116-136 (LTWV…VTGY), and 186-206 (LHTF…FLMI). Histidine 187 and histidine 202 together coordinate heme b.

It belongs to the cytochrome b family. PetB subfamily. The 4 large subunits of the cytochrome b6-f complex are cytochrome b6, subunit IV (17 kDa polypeptide, PetD), cytochrome f and the Rieske protein, while the 4 small subunits are PetG, PetL, PetM and PetN. The complex functions as a dimer. Heme b is required as a cofactor. It depends on heme c as a cofactor.

The protein localises to the plastid. The protein resides in the chloroplast thylakoid membrane. Component of the cytochrome b6-f complex, which mediates electron transfer between photosystem II (PSII) and photosystem I (PSI), cyclic electron flow around PSI, and state transitions. This Auxenochlorella protothecoides (Green microalga) protein is Cytochrome b6.